The primary structure comprises 440 residues: 5-methylthioadenosine/S-adenosylhomocysteine deaminase (440 aa).

Zn(2+) is bound by residues His-70 and His-72. Glu-99 and His-191 together coordinate substrate. Position 218 (His-218) interacts with Zn(2+). Substrate contacts are provided by Glu-221 and Asp-306. Asp-306 provides a ligand contact to Zn(2+).

Belongs to the metallo-dependent hydrolases superfamily. MTA/SAH deaminase family. It depends on Zn(2+) as a cofactor.

The catalysed reaction is S-adenosyl-L-homocysteine + H2O + H(+) = S-inosyl-L-homocysteine + NH4(+). The enzyme catalyses S-methyl-5'-thioadenosine + H2O + H(+) = S-methyl-5'-thioinosine + NH4(+). In terms of biological role, catalyzes the deamination of 5-methylthioadenosine and S-adenosyl-L-homocysteine into 5-methylthioinosine and S-inosyl-L-homocysteine, respectively. Is also able to deaminate adenosine. In Nitratidesulfovibrio vulgaris (strain DSM 19637 / Miyazaki F) (Desulfovibrio vulgaris), this protein is 5-methylthioadenosine/S-adenosylhomocysteine deaminase.